The primary structure comprises 181 residues: Reverse rubrerythrin-1 (181 aa).

A Rubredoxin-like domain is found at 1–35 (MKKFKCVVCGYIYTGEDAPEKCPVCGAGKDKFVEV). Fe cation contacts are provided by Cys6, Cys9, Cys22, Cys25, Glu69, Glu102, Glu132, Glu165, and His168. In terms of domain architecture, Ferritin-like diiron spans 52-181 (KGVDKEVLEG…FRGLLNRYFK (130 aa)).

Homodimer. Requires Fe(3+) as cofactor.

It catalyses the reaction H2O2 + NADH + H(+) = NAD(+) + 2 H2O. Functionally, functions as the terminal component of an NADH peroxidase (NADH:H(2)O(2) oxidoreductase) when using NADH:rubredoxin oxidoreductase (NROR) and rubredoxin (Rd) as electron transport intermediaries from NADH to revRbr 1. Plays an important role in the oxidative stress defense system in C.acetobutylicum, an obligate anaerobic bacterium. Also exhibits NADH oxidase (NADH:O(2) oxidoreductase) activity in vitro, which is 100-fold lesser than that of FprA1/2 using the same electron transfer components. Therefore, its predominant function is most likely as a scavenger of its preferred substrate, H(2)O(2). This is Reverse rubrerythrin-1 (rbr3A) from Clostridium acetobutylicum (strain ATCC 824 / DSM 792 / JCM 1419 / IAM 19013 / LMG 5710 / NBRC 13948 / NRRL B-527 / VKM B-1787 / 2291 / W).